The following is a 434-amino-acid chain: Enolase (434 aa).

Glutamine 165 contacts (2R)-2-phosphoglycerate. Catalysis depends on glutamate 207, which acts as the Proton donor. Mg(2+) is bound by residues aspartate 244, glutamate 291, and aspartate 318. Lysine 343, arginine 372, serine 373, and lysine 394 together coordinate (2R)-2-phosphoglycerate. Residue lysine 343 is the Proton acceptor of the active site.

The protein belongs to the enolase family. It depends on Mg(2+) as a cofactor.

Its subcellular location is the cytoplasm. The protein localises to the secreted. It localises to the cell surface. The catalysed reaction is (2R)-2-phosphoglycerate = phosphoenolpyruvate + H2O. Its pathway is carbohydrate degradation; glycolysis; pyruvate from D-glyceraldehyde 3-phosphate: step 4/5. In terms of biological role, catalyzes the reversible conversion of 2-phosphoglycerate (2-PG) into phosphoenolpyruvate (PEP). It is essential for the degradation of carbohydrates via glycolysis. In Staphylococcus epidermidis (strain ATCC 35984 / DSM 28319 / BCRC 17069 / CCUG 31568 / BM 3577 / RP62A), this protein is Enolase.